A 165-amino-acid chain; its full sequence is Chorismate pyruvate-lyase (165 aa).

Residues methionine 35, arginine 77, leucine 115, and glutamate 156 each contribute to the substrate site.

It belongs to the UbiC family. Monomer.

The protein resides in the cytoplasm. The catalysed reaction is chorismate = 4-hydroxybenzoate + pyruvate. The protein operates within cofactor biosynthesis; ubiquinone biosynthesis. Removes the pyruvyl group from chorismate, with concomitant aromatization of the ring, to provide 4-hydroxybenzoate (4HB) for the ubiquinone pathway. The sequence is that of Chorismate pyruvate-lyase from Enterobacter sp. (strain 638).